Here is a 430-residue protein sequence, read N- to C-terminus: Rosmarinate synthase (430 aa).

The Proton acceptor role is filled by H152. Residues 178–210 (TPLPHFDRSSLSARNPPQPQFSHAEYQPPPTLE) are disordered. The active-site Proton acceptor is the D377.

The protein belongs to the plant acyltransferase family.

It catalyses the reaction (2R)-3-(3,4-dihydroxyphenyl)lactate + (E)-caffeoyl-CoA = (R)-rosmarinate + CoA. In terms of biological role, involved in the biosynthesis of rosmarinic acid, a compound with antiviral, antimicrobial and anti-inflammatory activities. Can use 4-coumaroyl- and caffeoyl-CoA as hydroxycinnamoyl donors and 4-Hydroxyphenyllactate and 3.4-Dihydroxyphenyllactate, but not shikimate or quinate, as hydroxycinnamoyl acceptors. Can also putatively catalyze amide formation with D-amino acids as acceptors. This is Rosmarinate synthase (RAS) from Plectranthus scutellarioides (Coleus).